A 678-amino-acid polypeptide reads, in one-letter code: RxLR effector protein PITG_16705 (678 aa).

The first 20 residues, 1–20 (MHLFFLTAVAFVITSVSVDA), serve as a signal peptide directing secretion. Positions 46–61 (RLLRKNSTVDLVGEER) match the RxLR-dEER motif.

This sequence belongs to the RxLR effector family.

The protein localises to the secreted. Its subcellular location is the host cytoplasm. Effector that enhances P.infestans colonization of Nicotiana benthamiana leaves. In Phytophthora infestans (strain T30-4) (Potato late blight agent), this protein is RxLR effector protein PITG_16705.